The primary structure comprises 102 residues: Small ribosomal subunit protein uS10 (102 aa).

This sequence belongs to the universal ribosomal protein uS10 family. In terms of assembly, part of the 30S ribosomal subunit.

Involved in the binding of tRNA to the ribosomes. This is Small ribosomal subunit protein uS10 from Micrococcus luteus (strain ATCC 4698 / DSM 20030 / JCM 1464 / CCM 169 / CCUG 5858 / IAM 1056 / NBRC 3333 / NCIMB 9278 / NCTC 2665 / VKM Ac-2230) (Micrococcus lysodeikticus).